The sequence spans 122 residues: Cytochrome c-556 (122 aa).

Heme-binding residues include Met-11, Cys-111, Cys-114, and His-115. Positions 11, 111, 114, and 115 each coordinate heme c.

As to quaternary structure, monomer. In terms of processing, binds 1 heme c group covalently per subunit.

Low-spin monoheme cytochrome c. This Agrobacterium tumefaciens (strain B2A) protein is Cytochrome c-556.